We begin with the raw amino-acid sequence, 98 residues long: NADH-ubiquinone oxidoreductase chain 4L (98 aa).

3 helical membrane passes run Met-1–Thr-21, Ser-29–Leu-49, and Ile-61–Ile-81.

This sequence belongs to the complex I subunit 4L family. Core subunit of respiratory chain NADH dehydrogenase (Complex I) which is composed of 45 different subunits.

The protein localises to the mitochondrion inner membrane. The catalysed reaction is a ubiquinone + NADH + 5 H(+)(in) = a ubiquinol + NAD(+) + 4 H(+)(out). Core subunit of the mitochondrial membrane respiratory chain NADH dehydrogenase (Complex I) which catalyzes electron transfer from NADH through the respiratory chain, using ubiquinone as an electron acceptor. Part of the enzyme membrane arm which is embedded in the lipid bilayer and involved in proton translocation. The sequence is that of NADH-ubiquinone oxidoreductase chain 4L (MT-ND4L) from Macaca pagensis (Mentawai macaque).